The chain runs to 178 residues: FXYD domain-containing ion transport regulator 5 (178 aa).

The signal sequence occupies residues 1–21; it reads MSLSSRLCLLTIVALILPSRG. The span at 21–59 shows a compositional bias: polar residues; that stretch reads GQTPKKPTSIFTADQTSATTRDNVPDPDQTSPGVQTTPL. The disordered stretch occupies residues 21-130; it reads GQTPKKPTSI…SYIEHPLDSN (110 aa). Residues 22 to 145 are Extracellular-facing; that stretch reads QTPKKPTSIF…YYDDTTLRKR (124 aa). Low complexity predominate over residues 67–79; the sequence is TGSQTAAQTETQQ. Residues 80-100 show a composition bias toward polar residues; sequence LTKMATSNPVSDPGPHTSSKK. Residues 146-166 form a helical membrane-spanning segment; sequence GLLVAAVLFITGIIILTSGKC. At 167–178 the chain is on the cytoplasmic side; that stretch reads RQLSQFCLNRHR.

The protein belongs to the FXYD family. Regulatory subunit of the sodium/potassium-transporting ATPase which is composed of a catalytic alpha subunit, a non-catalytic beta subunit and an additional regulatory subunit. The regulatory subunit, a member of the FXYD protein family, modulates the enzymatic activity in a tissue- and isoform-specific way by changing affinities of the Na+/K+-ATPase toward Na(+), K(+) or ATP. Glycosylated. Expressed mainly in epithelial tissue, such as lung, intestine and kidney. Not detected in brain, liver, muscle, and heart.

It localises to the cell membrane. It is found in the basolateral cell membrane. In terms of biological role, associates with and regulates the activity of the sodium/potassium-transporting ATPase (NKA) which catalyzes the hydrolysis of ATP coupled with the exchange of Na(+) and K(+) ions across the plasma membrane. May increase NKA activity by increasing the apparent affinity for Na(+). Involved in down-regulation of E-cadherin which results in reduced cell adhesion. Promotes metastasis. The polypeptide is FXYD domain-containing ion transport regulator 5 (Fxyd5) (Mus musculus (Mouse)).